Consider the following 966-residue polypeptide: Insulin-degrading enzyme-like 2 (966 aa).

Residue histidine 71 coordinates Zn(2+). Glutamate 74 functions as the Proton acceptor in the catalytic mechanism. Histidine 75 contributes to the Zn(2+) binding site. Glutamate 145 is an active-site residue. Glutamate 152 serves as a coordination point for Zn(2+).

Belongs to the peptidase M16 family. It depends on Zn(2+) as a cofactor.

This is Insulin-degrading enzyme-like 2 from Arabidopsis thaliana (Mouse-ear cress).